We begin with the raw amino-acid sequence, 213 residues long: Charged multivesicular body protein 2b (213 aa).

A2 carries the post-translational modification N-acetylalanine. The stretch at 25–55 forms a coiled coil; it reads QRAIIRDRAALEKQEKQLELEIKKMAKIGNK. Residues 178–202 are disordered; that stretch reads MAKAPSAARSLPSASTSKSTISDEE. Residues 179-194 are compositionally biased toward low complexity; sequence AKAPSAARSLPSASTS. At S199 the chain carries Phosphoserine. The MIT-interacting motif signature appears at 201-211; sequence EEIERQLKALG.

It belongs to the SNF7 family. In terms of assembly, probable core component of the endosomal sorting required for transport complex III (ESCRT-III). ESCRT-III components are thought to multimerize to form a flat lattice on the perimeter membrane of the endosome. Several assembly forms of ESCRT-III may exist that interact and act sequentially. Interacts with CHMP2A. Interacts with VPS4A. Interacts with VPS4B; the interaction is direct.

The protein resides in the cytoplasm. It is found in the cytosol. It localises to the late endosome membrane. Probable core component of the endosomal sorting required for transport complex III (ESCRT-III) which is involved in multivesicular bodies (MVBs) formation and sorting of endosomal cargo proteins into MVBs. MVBs contain intraluminal vesicles (ILVs) that are generated by invagination and scission from the limiting membrane of the endosome and mostly are delivered to lysosomes enabling degradation of membrane proteins, such as stimulated growth factor receptors, lysosomal enzymes and lipids. The MVB pathway appears to require the sequential function of ESCRT-O, -I,-II and -III complexes. ESCRT-III proteins mostly dissociate from the invaginating membrane before the ILV is released. The ESCRT machinery also functions in topologically equivalent membrane fission events, such as the terminal stages of cytokinesis and the budding of enveloped viruses (lentiviruses). ESCRT-III proteins are believed to mediate the necessary vesicle extrusion and/or membrane fission activities, possibly in conjunction with the AAA ATPase VPS4. This Bos taurus (Bovine) protein is Charged multivesicular body protein 2b (CHMP2B).